Here is a 400-residue protein sequence, read N- to C-terminus: ATP-dependent rRNA helicase RRP3 (400 aa).

Residues 1 to 29 (MEFGDLRIDESLIKTCQEKGITRPTEVQR) carry the Q motif motif. The 171-residue stretch at 32–202 (IPAVLGGGDV…SSILKRPKTI (171 aa)) folds into the Helicase ATP-binding domain. 45–52 (SQTGSGKT) provides a ligand contact to ATP. The DEAD box motif lies at 150-153 (DEAD). Residues 229–373 (ALVELLEMSQ…EFKMMKKNFG (145 aa)) enclose the Helicase C-terminal domain.

Belongs to the DEAD box helicase family. DDX47/RRP3 subfamily. In terms of assembly, interacts with the SSU processome.

It is found in the nucleus. The enzyme catalyses ATP + H2O = ADP + phosphate + H(+). In terms of biological role, ATP-dependent rRNA helicase required for pre-ribosomal RNA processing. Involved in the maturation of the 35S-pre-rRNA and to its cleavage to mature 18S rRNA. The chain is ATP-dependent rRNA helicase RRP3 from Encephalitozoon cuniculi (strain GB-M1) (Microsporidian parasite).